The primary structure comprises 183 residues: Adenine phosphoribosyltransferase (183 aa).

The protein belongs to the purine/pyrimidine phosphoribosyltransferase family. As to quaternary structure, homodimer.

It is found in the cytoplasm. The catalysed reaction is AMP + diphosphate = 5-phospho-alpha-D-ribose 1-diphosphate + adenine. It participates in purine metabolism; AMP biosynthesis via salvage pathway; AMP from adenine: step 1/1. Its function is as follows. Catalyzes a salvage reaction resulting in the formation of AMP, that is energically less costly than de novo synthesis. The sequence is that of Adenine phosphoribosyltransferase from Blochmanniella floridana.